Here is a 430-residue protein sequence, read N- to C-terminus: Histidine--tRNA ligase (430 aa).

Belongs to the class-II aminoacyl-tRNA synthetase family. As to quaternary structure, homodimer.

The protein resides in the cytoplasm. It catalyses the reaction tRNA(His) + L-histidine + ATP = L-histidyl-tRNA(His) + AMP + diphosphate + H(+). This is Histidine--tRNA ligase from Synechococcus sp. (strain CC9902).